A 309-amino-acid chain; its full sequence is Glutaminase (309 aa).

Positions 64, 114, 160, 167, 191, 243, and 261 each coordinate substrate.

The protein belongs to the glutaminase family. Homotetramer.

It carries out the reaction L-glutamine + H2O = L-glutamate + NH4(+). This is Glutaminase from Rhizobium etli (strain CIAT 652).